The following is a 291-amino-acid chain: Urease accessory protein UreD (291 aa).

This sequence belongs to the UreD family. UreD, UreF and UreG form a complex that acts as a GTP-hydrolysis-dependent molecular chaperone, activating the urease apoprotein by helping to assemble the nickel containing metallocenter of UreC. The UreE protein probably delivers the nickel.

It localises to the cytoplasm. Required for maturation of urease via the functional incorporation of the urease nickel metallocenter. This is Urease accessory protein UreD from Acinetobacter baumannii (strain ACICU).